The chain runs to 379 residues: Alcohol dehydrogenase class-2 isozyme 2 (379 aa).

Residues cysteine 47, histidine 69, cysteine 99, cysteine 102, cysteine 105, cysteine 113, and cysteine 176 each coordinate Zn(2+). Residues 205-210 (GLGGVG), aspartate 229, lysine 234, 298-300 (VGV), and arginine 374 contribute to the NAD(+) site.

The protein belongs to the zinc-containing alcohol dehydrogenase family. Class-II subfamily. Homodimer. The cofactor is Zn(2+).

Its subcellular location is the cytoplasm. The enzyme catalyses a primary alcohol + NAD(+) = an aldehyde + NADH + H(+). It carries out the reaction a secondary alcohol + NAD(+) = a ketone + NADH + H(+). This chain is Alcohol dehydrogenase class-2 isozyme 2 (ADH2-2), found in Oryctolagus cuniculus (Rabbit).